Consider the following 381-residue polypeptide: Dual-specificity RNA methyltransferase RlmN (381 aa).

E95 acts as the Proton acceptor in catalysis. The Radical SAM core domain maps to 101–347; it reads EDDRGTLCVS…TTVRKTRGDD (247 aa). A disulfide bridge connects residues C108 and C352. Positions 115, 119, and 122 each coordinate [4Fe-4S] cluster. S-adenosyl-L-methionine-binding positions include 178–179, S210, 232–234, and N309; these read GE and SLH. Catalysis depends on C352, which acts as the S-methylcysteine intermediate.

This sequence belongs to the radical SAM superfamily. RlmN family. [4Fe-4S] cluster serves as cofactor.

It is found in the cytoplasm. It carries out the reaction adenosine(2503) in 23S rRNA + 2 reduced [2Fe-2S]-[ferredoxin] + 2 S-adenosyl-L-methionine = 2-methyladenosine(2503) in 23S rRNA + 5'-deoxyadenosine + L-methionine + 2 oxidized [2Fe-2S]-[ferredoxin] + S-adenosyl-L-homocysteine. The enzyme catalyses adenosine(37) in tRNA + 2 reduced [2Fe-2S]-[ferredoxin] + 2 S-adenosyl-L-methionine = 2-methyladenosine(37) in tRNA + 5'-deoxyadenosine + L-methionine + 2 oxidized [2Fe-2S]-[ferredoxin] + S-adenosyl-L-homocysteine. Specifically methylates position 2 of adenine 2503 in 23S rRNA and position 2 of adenine 37 in tRNAs. m2A2503 modification seems to play a crucial role in the proofreading step occurring at the peptidyl transferase center and thus would serve to optimize ribosomal fidelity. The chain is Dual-specificity RNA methyltransferase RlmN from Bordetella petrii (strain ATCC BAA-461 / DSM 12804 / CCUG 43448).